The sequence spans 122 residues: Large ribosomal subunit protein uL14 (122 aa).

This sequence belongs to the universal ribosomal protein uL14 family. Part of the 50S ribosomal subunit. Forms a cluster with proteins L3 and L19. In the 70S ribosome, L14 and L19 interact and together make contacts with the 16S rRNA in bridges B5 and B8.

In terms of biological role, binds to 23S rRNA. Forms part of two intersubunit bridges in the 70S ribosome. The protein is Large ribosomal subunit protein uL14 of Nitrosospira multiformis (strain ATCC 25196 / NCIMB 11849 / C 71).